The sequence spans 354 residues: Serum paraoxonase/lactonase 3 (354 aa).

The N-linked (GlcNAc...) asparagine glycan is linked to N29. C42 and C352 are oxidised to a cystine. Ca(2+) contacts are provided by E53 and D54. H114 (proton acceptor) is an active-site residue. I116 contacts Ca(2+). S165 carries the post-translational modification Phosphoserine. Ca(2+) contacts are provided by N167, D168, N223, D268, and N269. N-linked (GlcNAc...) asparagine glycans are attached at residues N269 and N323.

Belongs to the paraoxonase family. As to quaternary structure, homodimer. Ca(2+) is required as a cofactor. Post-translationally, the signal sequence is not cleaved.

Its subcellular location is the secreted. It localises to the extracellular space. The catalysed reaction is a phenyl acetate + H2O = a phenol + acetate + H(+). The enzyme catalyses An aryl dialkyl phosphate + H2O = dialkyl phosphate + an aryl alcohol.. It carries out the reaction an N-acyl-L-homoserine lactone + H2O = an N-acyl-L-homoserine + H(+). Its function is as follows. Has low activity towards the organophosphate paraxon and aromatic carboxylic acid esters. Rapidly hydrolyzes lactones such as statin prodrugs (e.g. lovastatin). Hydrolyzes aromatic lactones and 5- or 6-member ring lactones with aliphatic substituents but not simple lactones or those with polar substituents. This is Serum paraoxonase/lactonase 3 (PON3) from Homo sapiens (Human).